Consider the following 150-residue polypeptide: Protein SprT-like (150 aa).

The region spanning 11 to 149 (ELVDKLSLTY…CGKCRGSLKE (139 aa)) is the SprT-like domain. A Zn(2+)-binding site is contributed by His-70. Glu-71 is a catalytic residue. His-74 provides a ligand contact to Zn(2+).

It belongs to the SprT family. Requires Zn(2+) as cofactor.

Its subcellular location is the cytoplasm. The polypeptide is Protein SprT-like (Oceanobacillus iheyensis (strain DSM 14371 / CIP 107618 / JCM 11309 / KCTC 3954 / HTE831)).